Here is a 350-residue protein sequence, read N- to C-terminus: Pleckstrin (350 aa).

The PH 1 domain occupies 4–101 (KRIREGYLVK…WVRDIKKAIK (98 aa)). Lysine 64 bears the N6-acetyllysine mark. Serine 113 and serine 117 each carry phosphoserine. The region spanning 136-221 (PEKGIKELNL…SPDAFYYFPD (86 aa)) is the DEP domain. The 104-residue stretch at 244 to 347 (VIIKQGCLLK…WIKAIQVASR (104 aa)) folds into the PH 2 domain.

Its function is as follows. Major protein kinase C substrate of platelets. This is Pleckstrin (Plek) from Mus musculus (Mouse).